The primary structure comprises 302 residues: MPNIDFVGKRSFFIYLSIALILFSVIVIFVKGFNLGVDFSGGSEIIVSFDKSYTIDELRNGLQTINQEYATAKIIQTNPGGGASDQFFYIITVRDSFPTLEEKQMFINSLEESFSDSSLNIEQFNDVSGYAAREIRSYAWYAVIISLIVLLAYITIRFQFSYGVGAILALAHDVIITLGFYSLFGIEMNLTAIAAFLTLAGYSLNDTIVVYDRIRENRSKNRGMDIESITNKSINEVIVRSLNTSLTTFLVVFMMFLLGGRSIASFAFGLTVGVIIGTYSSLYIASPIVIGMVKRRKKTQKA.

6 helical membrane passes run 12 to 32 (FFIY…FVKG), 138 to 158 (YAWY…TIRF), 166 to 186 (AILA…LFGI), 190 to 210 (LTAI…TIVV), 249 to 269 (FLVV…FAFG), and 272 to 292 (VGVI…VIGM).

Belongs to the SecD/SecF family. SecF subfamily. In terms of assembly, forms a complex with SecD. Part of the essential Sec protein translocation apparatus which comprises SecA, SecYEG and auxiliary proteins SecDF. Other proteins may also be involved.

It localises to the cell inner membrane. Functionally, part of the Sec protein translocase complex. Interacts with the SecYEG preprotein conducting channel. SecDF uses the proton motive force (PMF) to complete protein translocation after the ATP-dependent function of SecA. The protein is Protein translocase subunit SecF of Petrotoga mobilis (strain DSM 10674 / SJ95).